The sequence spans 265 residues: MDYFPVISVDLQSGRRVVSVEYFRGDGPPRIPYSMVGPCCVFLMHHRPSHEVRLRFSDFYNVGEFPYRVGLGDFASNVAPPPAKPFQRLIDLIGHMTLSDFTRFPNLKEAISWPLGEPSLAFFDLSSTRVHRNDDIRRDQIATLAMRSCKITNDLEDSFVGLHRMIATEAILRGIDLCLLPGFDLMYEVAHVQCVRLLQAAKEDISNAVVPNSALIVLMEESLMLRSSLPSMMGRNNWIPVIPPIPDVEMESEEESDDDGFVEVD.

A disordered region spans residues 249 to 265; it reads EMESEEESDDDGFVEVD. 2 positions are modified to phosphoserine: S252 and S256. An OmegaXaV motif is present at residues 261–265; that stretch reads FVEVD.

Belongs to the phlebovirus NS-S protein family. Multimerizes; forms 0.5-1 mm thick proteinaceous filaments in the nucleus. Interacts (via omegaXaV motif) with host FBXW11; this interaction is important for EIF2AK2/PKR degradation. Interacts (via omegaXaV motif) with host GTF2H1. Interacts with the host E3 ubiquitin ligase component FBXO3 (via ApaG domain); this interaction is important for GTF2H1 degradation. Phosphorylated.

The protein resides in the host nucleus. The protein localises to the host cytoplasm. Plays a role in the escape of host innate immune response by promoting the degradation of host EIF2AK2/PKR and inhibiting host transcription. Cytoplasmic NSs interacts with host FBXW11 to degrade PKR whereas nuclear pool binds to host FBXO3 to target TFIIH subunit GTF2H1 for proteasomal degradation with the help of the linker protein SKP1. Removes FBXO3 isoform 1 from the nucleus. Forms nuclear amyloid-like filaments of about 12 nm in width that may sequester NSs binding partners, causing cell cycle arrest. Also aggragates in the cytosol as short fibrils late after host cell infection. Plays a role in cell morphology and/or motility, reduction of lamellipodia, cell spreading, and dissolution of adherens junctions. The sequence is that of Non-structural protein S (NSS) from Aedes (Bovine).